The primary structure comprises 353 residues: UPF0283 membrane protein YcjF (353 aa).

3 helical membrane passes run 70–90 (MVMGGLALFGASVVGQGVQWT), 100–120 (VALGGCAAGALIIGAGVGSVV), and 213–233 (ESTLMIAVSPLALVDMAFIAW).

Belongs to the UPF0283 family.

It localises to the cell inner membrane. The chain is UPF0283 membrane protein YcjF from Escherichia coli O7:K1 (strain IAI39 / ExPEC).